A 167-amino-acid chain; its full sequence is Leptin (167 aa).

An N-terminal signal peptide occupies residues 1 to 21 (MYWRTLWGFLWLWPYLFYIQA). A disulfide bond links Cys117 and Cys167.

This sequence belongs to the leptin family.

It is found in the secreted. Key player in the regulation of energy balance and body weight control. Once released into the circulation, has central and peripheral effects by binding LEPR, found in many tissues, which results in the activation of several major signaling pathways. In the hypothalamus, acts as an appetite-regulating factor that induces a decrease in food intake and an increase in energy consumption by inducing anorexinogenic factors and suppressing orexigenic neuropeptides, also regulates bone mass and secretion of hypothalamo-pituitary-adrenal hormones. In the periphery, increases basal metabolism, influences reproductive function, regulates pancreatic beta-cell function and insulin secretion, is pro-angiogenic for endothelial cell and affects innate and adaptive immunity. In the arcuate nucleus of the hypothalamus, activates by depolarization POMC neurons inducing FOS and SOCS3 expression to release anorexigenic peptides and inhibits by hyperpolarization NPY neurons inducing SOCS3 with a consequent reduction on release of orexigenic peptides. In addition to its known satiety inducing effect, has a modulatory role in nutrient absorption. In the intestine, reduces glucose absorption by enterocytes by activating PKC and leading to a sequential activation of p38, PI3K and ERK signaling pathways which exerts an inhibitory effect on glucose absorption. Acts as a growth factor on certain tissues, through the activation of different signaling pathways increases expression of genes involved in cell cycle regulation such as CCND1, via JAK2-STAT3 pathway, or VEGFA, via MAPK1/3 and PI3K-AKT1 pathways. May also play an apoptotic role via JAK2-STAT3 pathway and up-regulation of BIRC5 expression. Pro-angiogenic, has mitogenic activity on vascular endothelial cells and plays a role in matrix remodeling by regulating the expression of matrix metalloproteinases (MMPs) and tissue inhibitors of metalloproteinases (TIMPs). In innate immunity, modulates the activity and function of neutrophils by increasing chemotaxis and the secretion of oxygen radicals. Increases phagocytosis by macrophages and enhances secretion of pro-inflammatory mediators. Increases cytotoxic ability of NK cells. Plays a pro-inflammatory role, in synergy with IL1B, by inducing NOS2 which promotes the production of IL6, IL8 and Prostaglandin E2, through a signaling pathway that involves JAK2, PI3K, MAP2K1/MEK1 and MAPK14/p38. In adaptive immunity, promotes the switch of memory T-cells towards T helper-1 cell immune responses. Increases CD4(+)CD25(-) T-cell proliferation and reduces autophagy during TCR (T-cell receptor) stimulation, through MTOR signaling pathway activation and BCL2 up-regulation. In Macaca mulatta (Rhesus macaque), this protein is Leptin (LEP).